The chain runs to 213 residues: TVP38/TMEM64 family membrane protein YtxB (213 aa).

6 consecutive transmembrane segments (helical) span residues 9–29 (WLAV…YLNV), 34–54 (IRVW…GISI), 58–78 (LVLF…GPLL), 81–101 (LYTL…AGLF), 159–179 (AVGI…FLAG), and 181–201 (LPAF…PFIF).

The protein belongs to the TVP38/TMEM64 family.

It is found in the cell membrane. The protein is TVP38/TMEM64 family membrane protein YtxB (ytxB) of Bacillus subtilis (strain 168).